A 1152-amino-acid chain; its full sequence is ATP-dependent helicase/deoxyribonuclease subunit B (1152 aa).

The 338-residue stretch at 1–338 (MSIRFIYGRA…LVRDRNYRFR (338 aa)) folds into the UvrD-like helicase ATP-binding domain. 8–15 (GRAGSGKS) lines the ATP pocket. The region spanning 276–579 (PYRFKNSEEL…NVGDIARIKG (304 aa)) is the UvrD-like helicase C-terminal domain. Positions 785, 1106, 1109, and 1115 each coordinate [4Fe-4S] cluster.

It belongs to the helicase family. AddB/RexB type 1 subfamily. In terms of assembly, heterodimer of AddA and AddB. It depends on Mg(2+) as a cofactor. Requires [4Fe-4S] cluster as cofactor.

Functionally, the heterodimer acts as both an ATP-dependent DNA helicase and an ATP-dependent, dual-direction single-stranded exonuclease. Recognizes the chi site generating a DNA molecule suitable for the initiation of homologous recombination. The AddB subunit has 5' -&gt; 3' nuclease activity but not helicase activity. This chain is ATP-dependent helicase/deoxyribonuclease subunit B, found in Clostridium botulinum (strain Alaska E43 / Type E3).